We begin with the raw amino-acid sequence, 171 residues long: MNLKDHIREVPDFPKPGILFYDISTLLADPDAWQVTMGRMAKVVAPRLPDVLAGIESRGFLVAAPLALKLGLGFVMVRKKGKLPGATVRHEYALEYGTDTVEVQEGAVLPGQRVVILDDLLATGGTLNAASELLGKMGANVVGAACIIELSFLKGRERTKVPIDSLVAYDS.

Belongs to the purine/pyrimidine phosphoribosyltransferase family. As to quaternary structure, homodimer.

It is found in the cytoplasm. The enzyme catalyses AMP + diphosphate = 5-phospho-alpha-D-ribose 1-diphosphate + adenine. It participates in purine metabolism; AMP biosynthesis via salvage pathway; AMP from adenine: step 1/1. Functionally, catalyzes a salvage reaction resulting in the formation of AMP, that is energically less costly than de novo synthesis. This Rhodospirillum rubrum (strain ATCC 11170 / ATH 1.1.1 / DSM 467 / LMG 4362 / NCIMB 8255 / S1) protein is Adenine phosphoribosyltransferase.